Here is a 131-residue protein sequence, read N- to C-terminus: Colicin-N immunity protein (131 aa).

2 consecutive transmembrane segments (helical) span residues 66 to 84 (ILTPFTILYISMIYCFLLT) and 104 to 124 (VFVFFLYNTIYWDIYIHIFVL).

It is found in the cell membrane. The protein is Colicin-N immunity protein (cni) of Escherichia coli.